We begin with the raw amino-acid sequence, 492 residues long: MTLWINGDWITGQGERRRKTNPVSAEILWQGNDANAAQVAEACQAARAAFPRWARQPFTARQAIVEKFAVLLEAHKADLTEVIARETGKPRWEAATEVTAMINKIAISIKAYHARTGEQKSELVDGAATLRHRPHGVLAVFGPYNFPGHLPNGHIVPALLAGNTLIFKPSELTPWTGETVIKLWERAGLPAGVLNLVQGGRETGQALSSLDDLDGLLFTGSASTGYQLHRQLSGQPEKILALEMGGNNPLIIEDVTNMDAAVHLTLQSAFITAGQRCTCARRLLVKQGAQGDAFLARLVDVAGRLQPGRWDDDPQPFIGGLISAQAAQHVMEAWRQREALGGRTLLAPRKVKEGTSLLTPGIIELTGVTDVPDEEVFGPLLNVWRYAHFDEAIRLANNTRFGLSCGLVSTDRAQFEQLLLEARAGIVNWNKPLTGAASTAPFGGVGASGNHRPSAWYAADYCAWPMASLESPELTLPATLSPGLDFSRREAV.

Residue 220-225 (GSASTG) coordinates NAD(+). Catalysis depends on residues Glu-243 and Cys-277.

Belongs to the aldehyde dehydrogenase family. AstD subfamily.

The enzyme catalyses N-succinyl-L-glutamate 5-semialdehyde + NAD(+) + H2O = N-succinyl-L-glutamate + NADH + 2 H(+). It participates in amino-acid degradation; L-arginine degradation via AST pathway; L-glutamate and succinate from L-arginine: step 4/5. In terms of biological role, catalyzes the NAD-dependent reduction of succinylglutamate semialdehyde into succinylglutamate. The protein is N-succinylglutamate 5-semialdehyde dehydrogenase of Salmonella paratyphi C (strain RKS4594).